Consider the following 517-residue polypeptide: Glucose-6-phosphate isomerase (517 aa).

Catalysis depends on glutamate 345, which acts as the Proton donor. Active-site residues include histidine 376 and lysine 490.

This sequence belongs to the GPI family.

It is found in the cytoplasm. The catalysed reaction is alpha-D-glucose 6-phosphate = beta-D-fructose 6-phosphate. The protein operates within carbohydrate biosynthesis; gluconeogenesis. Its pathway is carbohydrate degradation; glycolysis; D-glyceraldehyde 3-phosphate and glycerone phosphate from D-glucose: step 2/4. Functionally, catalyzes the reversible isomerization of glucose-6-phosphate to fructose-6-phosphate. This is Glucose-6-phosphate isomerase from Erythrobacter litoralis (strain HTCC2594).